The chain runs to 227 residues: Arginine ABC transporter permease protein ArtM (227 aa).

One can recognise an ABC transmembrane type-1 domain in the interval 13 to 209 (IPTSLLLTVV…IITGIATLLL (197 aa)). The next 5 helical transmembrane spans lie at 17–37 (LLLT…LTFL), 51–71 (LYLT…IYAG), 78–98 (IIDS…ALAL), 155–175 (IILV…DIMG), and 188–208 (LTIY…ATLL).

Belongs to the binding-protein-dependent transport system permease family. HisMQ subfamily. The complex is composed of two ATP-binding proteins (ArtP), two transmembrane proteins (ArtM and ArtQ) and a solute-binding protein (ArtI).

It is found in the cell inner membrane. Functionally, part of the ABC transporter complex ArtPIQM involved in arginine transport. Probably responsible for the translocation of the substrate across the membrane. This Haemophilus influenzae (strain ATCC 51907 / DSM 11121 / KW20 / Rd) protein is Arginine ABC transporter permease protein ArtM (artM).